A 155-amino-acid chain; its full sequence is Protein SprT-like (155 aa).

Positions 7–145 (QQHMEEVSLQ…GSCGGRLKQT (139 aa)) constitute a SprT-like domain. A Zn(2+)-binding site is contributed by His-67. The active site involves Glu-68. A Zn(2+)-binding site is contributed by His-71.

It belongs to the SprT family. The cofactor is Zn(2+).

Its subcellular location is the cytoplasm. This Listeria innocua serovar 6a (strain ATCC BAA-680 / CLIP 11262) protein is Protein SprT-like.